Reading from the N-terminus, the 703-residue chain is Elongation factor G (703 aa).

The 284-residue stretch at 9-292 (ERTRNIGIMA…AVVDYLPGPL (284 aa)) folds into the tr-type G domain. GTP-binding positions include 18 to 25 (AHIDAGKT), 91 to 95 (DTPGH), and 145 to 148 (NKMD).

It belongs to the TRAFAC class translation factor GTPase superfamily. Classic translation factor GTPase family. EF-G/EF-2 subfamily.

It is found in the cytoplasm. Its function is as follows. Catalyzes the GTP-dependent ribosomal translocation step during translation elongation. During this step, the ribosome changes from the pre-translocational (PRE) to the post-translocational (POST) state as the newly formed A-site-bound peptidyl-tRNA and P-site-bound deacylated tRNA move to the P and E sites, respectively. Catalyzes the coordinated movement of the two tRNA molecules, the mRNA and conformational changes in the ribosome. In Leuconostoc mesenteroides subsp. mesenteroides (strain ATCC 8293 / DSM 20343 / BCRC 11652 / CCM 1803 / JCM 6124 / NCDO 523 / NBRC 100496 / NCIMB 8023 / NCTC 12954 / NRRL B-1118 / 37Y), this protein is Elongation factor G.